The primary structure comprises 444 residues: Ribulose bisphosphate carboxylase (444 aa).

K163 acts as the Proton acceptor in catalysis. A substrate-binding site is contributed by K165. Positions 189, 191, and 192 each coordinate Mg(2+). K189 carries the post-translational modification N6-carboxylysine. H281 functions as the Proton acceptor in the catalytic mechanism. Substrate is bound by residues R282, H314, 367 to 369 (SGG), and 389 to 392 (QLGG).

Belongs to the RuBisCO large chain family. Type III subfamily. As to quaternary structure, homodecamer, consisting of five dimer units which form a ring-like pentagonal structure. This arrangement is essential for its high thermostability. In contrast to form I RuBisCO, the form III RuBisCO is composed solely of large subunits. Mg(2+) is required as a cofactor.

It catalyses the reaction 2 (2R)-3-phosphoglycerate + 2 H(+) = D-ribulose 1,5-bisphosphate + CO2 + H2O. It carries out the reaction D-ribulose 1,5-bisphosphate + O2 = 2-phosphoglycolate + (2R)-3-phosphoglycerate + 2 H(+). Functionally, catalyzes the addition of molecular CO(2) and H(2)O to ribulose 1,5-bisphosphate (RuBP), generating two molecules of 3-phosphoglycerate (3-PGA). Functions in an archaeal AMP degradation pathway, together with AMP phosphorylase and R15P isomerase. The protein is Ribulose bisphosphate carboxylase of Thermococcus kodakarensis (strain ATCC BAA-918 / JCM 12380 / KOD1) (Pyrococcus kodakaraensis (strain KOD1)).